Reading from the N-terminus, the 309-residue chain is S-methyl-5'-thioadenosine phosphorylase (309 aa).

Phosphate contacts are provided by residues threonine 19, 64-65, and 97-98; these read RH and SA. Methionine 201 serves as a coordination point for substrate. Phosphate is bound at residue serine 202. Substrate is bound at residue 225-227; the sequence is DYD.

Belongs to the PNP/MTAP phosphorylase family. MTAP subfamily. In terms of assembly, homotrimer.

Its subcellular location is the cytoplasm. The protein resides in the nucleus. It carries out the reaction S-methyl-5'-thioadenosine + phosphate = 5-(methylsulfanyl)-alpha-D-ribose 1-phosphate + adenine. It participates in amino-acid biosynthesis; L-methionine biosynthesis via salvage pathway; S-methyl-5-thio-alpha-D-ribose 1-phosphate from S-methyl-5'-thioadenosine (phosphorylase route): step 1/1. In terms of biological role, catalyzes the reversible phosphorylation of S-methyl-5'-thioadenosine (MTA) to adenine and 5-methylthioribose-1-phosphate. Involved in the breakdown of MTA, a major by-product of polyamine biosynthesis. Responsible for the first step in the methionine salvage pathway after MTA has been generated from S-adenosylmethionine. Has broad substrate specificity with 6-aminopurine nucleosides as preferred substrates. The sequence is that of S-methyl-5'-thioadenosine phosphorylase from Tuber melanosporum (strain Mel28) (Perigord black truffle).